Reading from the N-terminus, the 639-residue chain is Threonine--tRNA ligase (639 aa).

The TGS domain maps to 1–61 (MIKVALKDGS…DTDCDLNLFK (61 aa)). The tract at residues 242–532 (DHRKLGKELG…LIEHYAGKFP (291 aa)) is catalytic. 3 residues coordinate Zn(2+): Cys333, His384, and His509.

The protein belongs to the class-II aminoacyl-tRNA synthetase family. In terms of assembly, homodimer. Zn(2+) serves as cofactor.

The protein localises to the cytoplasm. It carries out the reaction tRNA(Thr) + L-threonine + ATP = L-threonyl-tRNA(Thr) + AMP + diphosphate + H(+). Functionally, catalyzes the attachment of threonine to tRNA(Thr) in a two-step reaction: L-threonine is first activated by ATP to form Thr-AMP and then transferred to the acceptor end of tRNA(Thr). Also edits incorrectly charged L-seryl-tRNA(Thr). The protein is Threonine--tRNA ligase of Clostridioides difficile (strain 630) (Peptoclostridium difficile).